The primary structure comprises 310 residues: Cysteine synthase (310 aa).

Lys46 carries the post-translational modification N6-(pyridoxal phosphate)lysine. Pyridoxal 5'-phosphate is bound by residues Asn76, 180-184 (GTGGT), and Ser268.

The protein belongs to the cysteine synthase/cystathionine beta-synthase family. Homodimer. Pyridoxal 5'-phosphate serves as cofactor.

The catalysed reaction is O-acetyl-L-serine + hydrogen sulfide = L-cysteine + acetate. Its pathway is amino-acid biosynthesis; L-cysteine biosynthesis; L-cysteine from L-serine: step 2/2. This chain is Cysteine synthase (cysK), found in Staphylococcus epidermidis (strain ATCC 35984 / DSM 28319 / BCRC 17069 / CCUG 31568 / BM 3577 / RP62A).